Here is a 1238-residue protein sequence, read N- to C-terminus: Cryptic loci regulator protein 1 (1238 aa).

Disordered regions lie at residues 133–156, 196–237, 277–303, 546–568, 696–735, and 784–824; these read TQQQVSNVSHGNFKPNSSVNTEPN, PFSN…PSSI, ASLYDRSPSKKDITSSRNTSSYNLGSM, QKSVSSETTLVKPSSTSSYIDTT, SDNTDCSLPKPSNSKLSSISSDGDASSNRMAVPDKSPFVH, and TLKE…QSRS. Residues 214 to 223 show a composition bias toward polar residues; that stretch reads NVKNNSKKTA. Over residues 224-237 the composition is skewed to low complexity; sequence SSVNSNHSSIPSSI. Polar residues predominate over residues 291–303; that stretch reads SSRNTSSYNLGSM. Over residues 702-723 the composition is skewed to low complexity; the sequence is SLPKPSNSKLSSISSDGDASSN. The segment covering 785–796 has biased composition (basic and acidic residues); the sequence is LKEDASSTKQAK. The span at 810-819 shows a compositional bias: polar residues; the sequence is NDVSKNNSGE. Residues 1062-1087 form a C2H2-type zinc finger; that stretch reads LNCEVSNCKKCFSNYEDMFKHLQHSH.

As to quaternary structure, interacts with clr3.

The protein localises to the nucleus. It localises to the chromosome. The protein resides in the centromere. It is found in the telomere. Regulates silencing of the mat2 and mat3 loci. Organizes the chromatin structure of the mating-type region where it also participates in establishing the 'cold spot' for recombination. Required for proper positioning of nucleosomes at heterochromatic loci and for transcriptional gene silencing (TGS) function of the Snf2/Hdac-containing repressor complex (SHREC). In Schizosaccharomyces pombe (strain 972 / ATCC 24843) (Fission yeast), this protein is Cryptic loci regulator protein 1 (clr1).